An 817-amino-acid polypeptide reads, in one-letter code: LisH domain-containing protein ARMC9 (817 aa).

Positions 7–39 constitute a LisH domain; it reads HESELLGLVKEYLDFAEFEDTLKTFSKECKVKG. Residues 204–230 adopt a coiled-coil conformation; sequence GPNSKELLQQLHQQLVEAERRAMTYLK. Phosphoserine is present on Ser-583. Disordered stretches follow at residues 637-659 and 761-817; these read RKGP…TPGG and CKPQ…SIRK. A compositionally biased stretch (polar residues) spans 765–774; sequence VPSTPETVEQ. The segment covering 793-807 has biased composition (low complexity); the sequence is PQQASRPASTASSTR. A compositionally biased stretch (polar residues) spans 808-817; that stretch reads GLHSSQSIRK.

Interacts with TOGARAM1, CCDC66, CEP104, CSPP1 and CEP290. Interacts with NDUFAF2.

The protein resides in the cytoplasm. It is found in the cytoskeleton. Its subcellular location is the cilium basal body. The protein localises to the cell projection. It localises to the cilium. The protein resides in the microtubule organizing center. It is found in the centrosome. Its subcellular location is the centriole. In terms of biological role, involved in ciliogenesis. It is required for appropriate acetylation and polyglutamylation of ciliary microtubules, and regulation of cilium length. Acts as a positive regulator of hedgehog (Hh) signaling. May participate in the trafficking and/or retention of GLI2 and GLI3 proteins at the ciliary tip. This Mus musculus (Mouse) protein is LisH domain-containing protein ARMC9.